The sequence spans 461 residues: Vitamin K-dependent protein C (461 aa).

An N-terminal signal peptide occupies residues 1–18 (MWQLTSLLLFVATWGISG). T19 carries an O-linked (GalNAc...) threonine glycan. A propeptide spanning residues 19-42 (TPAPLDSVFSSSERAHQVLRIRKR) is cleaved from the precursor. Positions 43–88 (ANSFLEELRHSSLERECIEEICDFEEAKEIFQNVDDTLAFWSKHVD) constitute a Gla domain. Residues E48, E49, E56, E58, E61, E62, E67, E68, and E71 each carry the 4-carboxyglutamate modification. A disulfide bridge connects residues C59 and C64. 4 disulfides stabilise this stretch: C92–C111, C101–C106, C105–C120, and C122–C131. 2 EGF-like domains span residues 97–132 (LEHP…RFCQ) and 136–176 (SFLN…LQCH). D113 is modified ((3R)-3-hydroxyaspartate). N-linked (GlcNAc...) asparagine glycosylation occurs at N139. 5 cysteine pairs are disulfide-bonded: C140/C151, C147/C160, C162/C175, C183/C319, and C238/C254. Residues 212–450 (LIDGKMTRRG…YLDWIHGHIR (239 aa)) enclose the Peptidase S1 domain. The active-site Charge relay system is H253. A glycan (N-linked (GlcNAc...) asparagine) is linked at N290. D299 (charge relay system) is an active-site residue. Position 347 is a phosphoserine; by FAM20C (S347). The N-linked (GlcNAc...) asparagine glycan is linked to N355. N371 carries N-linked (GlcNAc...) asparagine; atypical; partial glycosylation. 2 disulfide bridges follow: C373–C387 and C398–C426. Residue S402 is the Charge relay system of the active site.

This sequence belongs to the peptidase S1 family. Synthesized as a single chain precursor, which is cleaved into a light chain and a heavy chain held together by a disulfide bond. The enzyme is then activated by thrombin, which cleaves a tetradecapeptide from the amino end of the heavy chain; this reaction, which occurs at the surface of endothelial cells, is strongly promoted by thrombomodulin. Interacts (activated) with iripin-8, a serine protease inhibitor from Ixodes ricinus saliva. Post-translationally, the vitamin K-dependent, enzymatic carboxylation of some Glu residues allows the modified protein to bind calcium. In terms of processing, N- and O-glycosylated. Partial (70%) N-glycosylation of Asn-371 with an atypical N-X-C site produces a higher molecular weight form referred to as alpha. The lower molecular weight form, not N-glycosylated at Asn-371, is beta. O-glycosylated with core 1 or possibly core 8 glycans. The iron and 2-oxoglutarate dependent 3-hydroxylation of aspartate and asparagine is (R) stereospecific within EGF domains. Post-translationally, may be phosphorylated on a Ser or Thr in a region (AA 25-30) of the propeptide. Plasma; synthesized in the liver.

It is found in the secreted. It localises to the golgi apparatus. The protein localises to the endoplasmic reticulum. It carries out the reaction Degradation of blood coagulation factors Va and VIIIa.. Functionally, protein C is a vitamin K-dependent serine protease that regulates blood coagulation by inactivating factors Va and VIIIa in the presence of calcium ions and phospholipids. Exerts a protective effect on the endothelial cell barrier function. The polypeptide is Vitamin K-dependent protein C (PROC) (Homo sapiens (Human)).